We begin with the raw amino-acid sequence, 385 residues long: MAKHLFTSESVSEGHPDKIADQISDAVLDAILAQDPKARVACETYVKTGMVLVGGEITTSAWVDIEELTRSTIREIGYIHSDMGFDANSCAVLSAIGKQSPDINQGVDRTDPLEQGAGDQGMMFGYATNETDVLMPAPITYAHRLVARQSQVRKNGTLPWLRPDAKSQVTFAYDNGKVVGIDAVVLSTQHAEDIALPQLKEAVMEEIIKPVLPAEWLSAQTKYFINPTGRFVIGGPMGDCGLTGRKIIVDTYGGMARHGGGAFSGKDPSKVDRSAAYAARYVAKNIVAAGLAERCEIQVSYAIGVAEPTSITIETFGTEKIPADNLTALVREFFDLRPHGLITMLDLLQPIYRETAAYGHFGREHFPWEKTDKAELLLRDAAGLK.

Position 15 (histidine 15) interacts with ATP. Aspartate 17 contributes to the Mg(2+) binding site. Glutamate 43 contributes to the K(+) binding site. Residues glutamate 56 and glutamine 99 each contribute to the L-methionine site. Residues 99 to 109 (QSPDINQGVDR) are flexible loop. ATP-binding positions include 164–166 (DAK), 230–231 (RF), aspartate 239, 245–246 (RK), alanine 262, and lysine 266. Aspartate 239 provides a ligand contact to L-methionine. An L-methionine-binding site is contributed by lysine 270.

This sequence belongs to the AdoMet synthase family. Homotetramer; dimer of dimers. It depends on Mg(2+) as a cofactor. The cofactor is K(+).

The protein resides in the cytoplasm. It carries out the reaction L-methionine + ATP + H2O = S-adenosyl-L-methionine + phosphate + diphosphate. It participates in amino-acid biosynthesis; S-adenosyl-L-methionine biosynthesis; S-adenosyl-L-methionine from L-methionine: step 1/1. Catalyzes the formation of S-adenosylmethionine (AdoMet) from methionine and ATP. The overall synthetic reaction is composed of two sequential steps, AdoMet formation and the subsequent tripolyphosphate hydrolysis which occurs prior to release of AdoMet from the enzyme. The chain is S-adenosylmethionine synthase from Sodalis glossinidius (strain morsitans).